The primary structure comprises 387 residues: Exodeoxyribonuclease 7 large subunit (387 aa).

It belongs to the XseA family. In terms of assembly, heterooligomer composed of large and small subunits.

It localises to the cytoplasm. The enzyme catalyses Exonucleolytic cleavage in either 5'- to 3'- or 3'- to 5'-direction to yield nucleoside 5'-phosphates.. In terms of biological role, bidirectionally degrades single-stranded DNA into large acid-insoluble oligonucleotides, which are then degraded further into small acid-soluble oligonucleotides. The chain is Exodeoxyribonuclease 7 large subunit from Campylobacter fetus subsp. fetus (strain 82-40).